The sequence spans 499 residues: UPF0159 protein Ta1429 (499 aa).

ThyX domains follow at residues 1-246 (MIDR…ALSQ) and 271-476 (EKVR…IKFV).

This sequence belongs to the UPF0159 family.

The protein is UPF0159 protein Ta1429 of Thermoplasma acidophilum (strain ATCC 25905 / DSM 1728 / JCM 9062 / NBRC 15155 / AMRC-C165).